The chain runs to 200 residues: Recombination protein RecR (200 aa).

The segment at 58 to 73 (CEVCHNLAEEGLCAIC) adopts a C4-type zinc-finger fold. The 96-residue stretch at 81–176 (GLICVVEEPV…DISRLAYGMP (96 aa)) folds into the Toprim domain.

Belongs to the RecR family.

May play a role in DNA repair. It seems to be involved in an RecBC-independent recombinational process of DNA repair. It may act with RecF and RecO. The polypeptide is Recombination protein RecR (Magnetococcus marinus (strain ATCC BAA-1437 / JCM 17883 / MC-1)).